We begin with the raw amino-acid sequence, 89 residues long: Small ribosomal subunit protein uS15 (89 aa).

This sequence belongs to the universal ribosomal protein uS15 family. Part of the 30S ribosomal subunit. Forms a bridge to the 50S subunit in the 70S ribosome, contacting the 23S rRNA.

Its function is as follows. One of the primary rRNA binding proteins, it binds directly to 16S rRNA where it helps nucleate assembly of the platform of the 30S subunit by binding and bridging several RNA helices of the 16S rRNA. Functionally, forms an intersubunit bridge (bridge B4) with the 23S rRNA of the 50S subunit in the ribosome. This Brucella abortus (strain S19) protein is Small ribosomal subunit protein uS15.